A 197-amino-acid chain; its full sequence is Putative RNA polymerase II subunit B1 CTD phosphatase rtr1 (197 aa).

Residues 60 to 139 (EARKYLRKSD…LSDEPLWIRE (80 aa)) form an RTR1-type zinc finger. 4 residues coordinate Zn(2+): Cys-83, Cys-88, Cys-115, and Cys-119.

This sequence belongs to the RPAP2 family.

The protein localises to the cytoplasm. It is found in the nucleus. It catalyses the reaction O-phospho-L-seryl-[protein] + H2O = L-seryl-[protein] + phosphate. The enzyme catalyses O-phospho-L-threonyl-[protein] + H2O = L-threonyl-[protein] + phosphate. Putative RNA polymerase II subunit B1 C-terminal domain (CTD) phosphatase involved in RNA polymerase II transcription regulation. The polypeptide is Putative RNA polymerase II subunit B1 CTD phosphatase rtr1 (Schizosaccharomyces pombe (strain 972 / ATCC 24843) (Fission yeast)).